A 426-amino-acid polypeptide reads, in one-letter code: Trigger factor (426 aa).

In terms of domain architecture, PPIase FKBP-type spans 166–249 (GDIVTFDFKG…IIEVKARELP (84 aa)).

Belongs to the FKBP-type PPIase family. Tig subfamily.

Its subcellular location is the cytoplasm. The enzyme catalyses [protein]-peptidylproline (omega=180) = [protein]-peptidylproline (omega=0). In terms of biological role, involved in protein export. Acts as a chaperone by maintaining the newly synthesized protein in an open conformation. Functions as a peptidyl-prolyl cis-trans isomerase. In Mesoplasma florum (strain ATCC 33453 / NBRC 100688 / NCTC 11704 / L1) (Acholeplasma florum), this protein is Trigger factor.